A 353-amino-acid chain; its full sequence is Putrescine N-methyltransferase 2 (353 aa).

Residues 15-50 are disordered; the sequence is KSGAIPMNGHHNGTSKHQNGHKNGTSEQQNGTISLD. Over residues 25–50 the composition is skewed to polar residues; it reads HNGTSKHQNGHKNGTSEQQNGTISLD. The PABS domain occupies 64-301; it reads PGWFSEFSAL…GVIGYMLCST (238 aa). S-adenosyl-L-methionine contacts are provided by residues glutamine 95, glutamate 170, and 201-202; that span reads DG. Aspartate 220 (proton acceptor) is an active-site residue. Tyrosine 289 provides a ligand contact to S-adenosyl-L-methionine.

Belongs to the class I-like SAM-binding methyltransferase superfamily. Putrescine methyltransferase family. Predominantly expressed in roots.

It carries out the reaction putrescine + S-adenosyl-L-methionine = N-methylputrescine + S-adenosyl-L-homocysteine + H(+). Its pathway is alkaloid biosynthesis; nicotine biosynthesis. Its function is as follows. Involved in the biosynthesis of pyridine alkaloid natural products, leading mainly to the production of anabasine, anatabine, nicotine and nornicotine, effective deterrents against herbivores with antiparasitic and pesticide properties (neurotoxins); nornicotine serves as the precursor in the synthesis of the carcinogen compound N'-nitrosonornicotine (NNN). Methyltransferase that mediates the conversion of putrescine to N-methylputrescine. Promotes leaves ripening. The protein is Putrescine N-methyltransferase 2 of Nicotiana tabacum (Common tobacco).